Reading from the N-terminus, the 459-residue chain is Cysteine--tRNA ligase (459 aa).

A Zn(2+)-binding site is contributed by cysteine 28. A 'HIGH' region motif is present at residues 30-40 (ITIYDLCHIGH). Residues cysteine 209, histidine 234, and glutamate 238 each coordinate Zn(2+). Residues 266–270 (KMSKS) carry the 'KMSKS' region motif. Lysine 269 lines the ATP pocket.

It belongs to the class-I aminoacyl-tRNA synthetase family. In terms of assembly, monomer. Zn(2+) is required as a cofactor.

It is found in the cytoplasm. It catalyses the reaction tRNA(Cys) + L-cysteine + ATP = L-cysteinyl-tRNA(Cys) + AMP + diphosphate. The sequence is that of Cysteine--tRNA ligase from Shewanella denitrificans (strain OS217 / ATCC BAA-1090 / DSM 15013).